The sequence spans 203 residues: ATP phosphoribosyltransferase (203 aa).

This sequence belongs to the ATP phosphoribosyltransferase family. Short subfamily.

The protein resides in the cytoplasm. It catalyses the reaction 1-(5-phospho-beta-D-ribosyl)-ATP + diphosphate = 5-phospho-alpha-D-ribose 1-diphosphate + ATP. It functions in the pathway amino-acid biosynthesis; L-histidine biosynthesis; L-histidine from 5-phospho-alpha-D-ribose 1-diphosphate: step 1/9. Catalyzes the condensation of ATP and 5-phosphoribose 1-diphosphate to form N'-(5'-phosphoribosyl)-ATP (PR-ATP). Has a crucial role in the pathway because the rate of histidine biosynthesis seems to be controlled primarily by regulation of HisG enzymatic activity. The polypeptide is ATP phosphoribosyltransferase (Thermococcus kodakarensis (strain ATCC BAA-918 / JCM 12380 / KOD1) (Pyrococcus kodakaraensis (strain KOD1))).